The following is a 335-amino-acid chain: Phosphate acyltransferase (335 aa).

It belongs to the PlsX family. Homodimer. Probably interacts with PlsY.

The protein localises to the cytoplasm. The enzyme catalyses a fatty acyl-[ACP] + phosphate = an acyl phosphate + holo-[ACP]. Its pathway is lipid metabolism; phospholipid metabolism. In terms of biological role, catalyzes the reversible formation of acyl-phosphate (acyl-PO(4)) from acyl-[acyl-carrier-protein] (acyl-ACP). This enzyme utilizes acyl-ACP as fatty acyl donor, but not acyl-CoA. The sequence is that of Phosphate acyltransferase from Alkaliphilus oremlandii (strain OhILAs) (Clostridium oremlandii (strain OhILAs)).